The primary structure comprises 873 residues: Zinc fingers and homeoboxes protein 1 (873 aa).

Positions 24-63 (LISDLDEGPPVLTPVENTRAESISSDEEVHESVDSDNQQN) are disordered. The residue at position 36 (Thr36) is a Phosphothreonine. 3 positions are modified to phosphoserine: Ser45, Ser47, and Ser48. 2 consecutive C2H2-type zinc fingers follow at residues 70-93 (YECK…DSEH) and 102-125 (YVCV…LKYH). Lys159 participates in a covalent cross-link: Glycyl lysine isopeptide (Lys-Gly) (interchain with G-Cter in SUMO2). Ser202 bears the Phosphoserine mark. A disordered region spans residues 202–236 (SVEDVPEEKENEIKPDREEIVENPSSSASESNTST). Positions 212-221 (NEIKPDREEI) are enriched in basic and acidic residues. Residues 223-236 (ENPSSSASESNTST) show a composition bias toward low complexity. Residues 272–432 (NSNLIPKVLI…QNNIQKSQVP (161 aa)) are required for dimerization. The interval 272-564 (NSNLIPKVLI…AQPKQSWNPF (293 aa)) is required for interaction with NFYA. Positions 284-346 (NSIPTYNAAL…LKHGVSWTPE (63 aa)) form a DNA-binding region, homeobox 1. Residues Lys441, Lys454, Lys485, and Lys629 each participate in a glycyl lysine isopeptide (Lys-Gly) (interchain with G-Cter in SUMO2) cross-link. 2 consecutive DNA-binding regions (homeobox) follow at residues 464–526 (SFGI…KSNQ) and 569–630 (PQKF…EEKM). Disordered stretches follow at residues 626–667 (KEEK…ICKK) and 732–770 (SSMN…NNWD). Position 648 is a phosphoserine (Ser648). A DNA-binding region (homeobox 4) is located at residues 660–722 (STGKICKKTP…YAWKNGNLKW (63 aa)). The tract at residues 734–768 (MNGLSSLRKRGRGRPKGRGRGRPRGRPRGSKRINN) is required for nuclear localization. Over residues 740 to 764 (LRKRGRGRPKGRGRGRPRGRPRGSK) the composition is skewed to basic residues. At Ser774 the chain carries Phosphoserine. Residues 777–832 (KFKTGTAILKDYYLKHKFLNEQDLDELVNKSHMGYEQVREWFAERQRRSELGIELF) constitute a DNA-binding region (homeobox 5). The tract at residues 829–873 (IELFEENEEEDEVIDDQEEDEEETDDSDTWEPPRHVKRKLSKSDD) is disordered. The segment covering 831 to 857 (LFEENEEEDEVIDDQEEDEEETDDSDT) has biased composition (acidic residues). The tract at residues 831 to 873 (LFEENEEEDEVIDDQEEDEEETDDSDTWEPPRHVKRKLSKSDD) is required for repressor activity. Positions 863–873 (HVKRKLSKSDD) are enriched in basic residues.

This sequence belongs to the ZHX family. As to quaternary structure, forms homodimers. Heterodimer (via HD1 domain) with ZHX2 (via HD1 domain). Also forms a heterodimer with ZHX3 which is a prerequisite for repressor activity. Interacts with ATF7IP and NFYA. Interacts (via homeobox domains) with DNMT3B (via PWWP domain). As to expression, ubiquitously expressed. Expressed in podocytes.

It localises to the nucleus. Functionally, acts as a transcriptional repressor. Increases DNMT3B-mediated repressive transcriptional activity when DNMT3B is tethered to DNA. May link molecule between DNMT3B and other co-repressor proteins. The sequence is that of Zinc fingers and homeoboxes protein 1 (ZHX1) from Homo sapiens (Human).